A 108-amino-acid chain; its full sequence is UPF0060 membrane protein Sca_1835 (108 aa).

The next 4 helical transmembrane spans lie at 5–25, 34–54, 60–80, and 84–104; these read ILIF…IWLW, FGLL…FQVF, VYAA…YVFD, and PDKY…IMLL.

The protein belongs to the UPF0060 family.

The protein resides in the cell membrane. This Staphylococcus carnosus (strain TM300) protein is UPF0060 membrane protein Sca_1835.